A 261-amino-acid chain; its full sequence is Phosphonates import ATP-binding protein PhnC (261 aa).

The ABC transporter domain occupies 8-253 (LRVENLSKTY…WFRRIYGEGA (246 aa)). ATP is bound at residue 41–48 (GLSGSGKS).

Belongs to the ABC transporter superfamily. Phosphonates importer (TC 3.A.1.9.1) family. In terms of assembly, the complex is composed of two ATP-binding proteins (PhnC), two transmembrane proteins (PhnE) and a solute-binding protein (PhnD).

Its subcellular location is the cell inner membrane. The catalysed reaction is phosphonate(out) + ATP + H2O = phosphonate(in) + ADP + phosphate + H(+). Functionally, part of the ABC transporter complex PhnCDE involved in phosphonates import. Responsible for energy coupling to the transport system. The chain is Phosphonates import ATP-binding protein PhnC from Bdellovibrio bacteriovorus (strain ATCC 15356 / DSM 50701 / NCIMB 9529 / HD100).